Consider the following 486-residue polypeptide: Cysteine--tRNA ligase (486 aa).

A Zn(2+)-binding site is contributed by cysteine 29. The short motif at 31-41 (ITVYDYCHLGH) is the 'HIGH' region element. Cysteine 215, histidine 240, and glutamate 244 together coordinate Zn(2+). The short motif at 272–276 (KMSKS) is the 'KMSKS' region element. Residue lysine 275 coordinates ATP.

It belongs to the class-I aminoacyl-tRNA synthetase family. Monomer. The cofactor is Zn(2+).

It localises to the cytoplasm. It catalyses the reaction tRNA(Cys) + L-cysteine + ATP = L-cysteinyl-tRNA(Cys) + AMP + diphosphate. In Gloeothece citriformis (strain PCC 7424) (Cyanothece sp. (strain PCC 7424)), this protein is Cysteine--tRNA ligase.